Reading from the N-terminus, the 316-residue chain is Ribosomal RNA small subunit methyltransferase H (316 aa).

S-adenosyl-L-methionine contacts are provided by residues 42–44, D62, F86, D104, and Q111; that span reads GGH.

The protein belongs to the methyltransferase superfamily. RsmH family.

Its subcellular location is the cytoplasm. It carries out the reaction cytidine(1402) in 16S rRNA + S-adenosyl-L-methionine = N(4)-methylcytidine(1402) in 16S rRNA + S-adenosyl-L-homocysteine + H(+). Specifically methylates the N4 position of cytidine in position 1402 (C1402) of 16S rRNA. The protein is Ribosomal RNA small subunit methyltransferase H of Polynucleobacter asymbioticus (strain DSM 18221 / CIP 109841 / QLW-P1DMWA-1) (Polynucleobacter necessarius subsp. asymbioticus).